We begin with the raw amino-acid sequence, 435 residues long: Methylenetetrahydrofolate--tRNA-(uracil-5-)-methyltransferase TrmFO (435 aa).

FAD is bound at residue 9–14; the sequence is GAGLAG.

It belongs to the MnmG family. TrmFO subfamily. Requires FAD as cofactor.

It localises to the cytoplasm. The enzyme catalyses uridine(54) in tRNA + (6R)-5,10-methylene-5,6,7,8-tetrahydrofolate + NADH + H(+) = 5-methyluridine(54) in tRNA + (6S)-5,6,7,8-tetrahydrofolate + NAD(+). It catalyses the reaction uridine(54) in tRNA + (6R)-5,10-methylene-5,6,7,8-tetrahydrofolate + NADPH + H(+) = 5-methyluridine(54) in tRNA + (6S)-5,6,7,8-tetrahydrofolate + NADP(+). Its function is as follows. Catalyzes the folate-dependent formation of 5-methyl-uridine at position 54 (M-5-U54) in all tRNAs. This chain is Methylenetetrahydrofolate--tRNA-(uracil-5-)-methyltransferase TrmFO, found in Staphylococcus aureus (strain Newman).